The sequence spans 509 residues: Legumin A (509 aa).

The first 21 residues, 1 to 21 (MAINPSLLFLSLLFLFNGCLA), serve as a signal peptide directing secretion. 2 disulfides stabilise this stretch: Cys34–Cys67 and Cys110–Cys331. A Cupin type-1 1 domain is found at 39-273 (LRASAPQTRI…AFNVDHDIIR (235 aa)). 2 disordered regions span residues 187–248 (AGNP…ESSS) and 298–325 (PRMEEEEREERQQEQRYRHTRGGSQDNG). A compositionally biased stretch (acidic residues) spans 212-228 (EESEEEEGEGEEEEEED). The span at 299-314 (RMEEEEREERQQEQRY) shows a compositional bias: basic and acidic residues. The Cupin type-1 2 domain maps to 337 to 486 (ENLADPERAD…SYQVSREDAR (150 aa)).

It belongs to the 11S seed storage protein (globulins) family. Hexamer; each subunit is composed of an acidic and a basic chain derived from a single precursor and linked by a disulfide bond.

Functionally, this is a seed storage protein. The polypeptide is Legumin A (LEGA) (Gossypium hirsutum (Upland cotton)).